Here is a 45-residue protein sequence, read N- to C-terminus: Photosystem II reaction center protein K (45 aa).

A propeptide spanning residues 1 to 8 is cleaved from the precursor; the sequence is MEAVLLLA. Residues 24–44 traverse the membrane as a helical segment; that stretch reads MPVIPLFFLALAFVWQAAVGF.

This sequence belongs to the PsbK family. As to quaternary structure, PSII is composed of 1 copy each of membrane proteins PsbA, PsbB, PsbC, PsbD, PsbE, PsbF, PsbH, PsbI, PsbJ, PsbK, PsbL, PsbM, PsbT, PsbX, PsbY, PsbZ, Psb30/Ycf12, peripheral proteins PsbO, CyanoQ (PsbQ), PsbU, PsbV and a large number of cofactors. It forms dimeric complexes.

The protein resides in the cellular thylakoid membrane. In terms of biological role, one of the components of the core complex of photosystem II (PSII). PSII is a light-driven water:plastoquinone oxidoreductase that uses light energy to abstract electrons from H(2)O, generating O(2) and a proton gradient subsequently used for ATP formation. It consists of a core antenna complex that captures photons, and an electron transfer chain that converts photonic excitation into a charge separation. This Acaryochloris marina (strain MBIC 11017) protein is Photosystem II reaction center protein K.